The sequence spans 2505 residues: Fatty acid synthase (2505 aa).

Met-1 carries the post-translational modification N-acetylmethionine. The 406-residue stretch at Met-1–Pro-406 folds into the Ketosynthase family 3 (KS3) domain. At Lys-59 the chain carries N6-acetyllysine. Ser-63 is modified (phosphoserine). Lys-70 carries the N6-acetyllysine modification. Cys-161 acts as the For beta-ketoacyl synthase activity in catalysis. Phosphoserine is present on Ser-207. The active-site For beta-ketoacyl synthase activity is the His-293. An N6-acetyllysine modification is found at Lys-298. His-331 serves as the catalytic For beta-ketoacyl synthase activity. The interval Arg-429–Pro-817 is acyl and malonyl transferases. Lys-528 carries the post-translational modification N6-acetyllysine. Ser-581 (for malonyltransferase activity) is an active-site residue. Residues Asp-647–Thr-648 and Phe-671 contribute to the an acyl-CoA site. Residue Lys-673 is modified to N6-acetyllysine. A Phosphoserine modification is found at Ser-725. Arg-773 contacts an acyl-CoA. Lys-790 is subject to N6-acetyllysine. Positions Ile-844–Ser-966 are N-terminal hotdog fold. The 269-residue stretch at Ile-844–Val-1112 folds into the PKS/mFAS DH domain. The Proton acceptor; for dehydratase activity role is filled by His-878. The C-terminal hotdog fold stretch occupies residues Val-983–Val-1112. Position 993 is an N6-acetyllysine (Lys-993). The active-site Proton donor; for dehydratase activity is the Asp-1032. At Lys-1276 the chain carries N6-acetyllysine. An S-nitrosocysteine modification is found at Cys-1464. Ser-1578 and Ser-1588 each carry phosphoserine. The interval Asp-1629 to Ala-1857 is enoyl reductase. Val-1665–Ala-1682 is an NADP(+) binding site. Lys-1698 is modified (N6-(pyridoxal phosphate)lysine; alternate). An N6-acetyllysine; alternate modification is found at Lys-1698. 3 positions are modified to N6-acetyllysine: Lys-1765, Lys-1841, and Lys-1989. Lys-1765–Leu-1780 contributes to the NADP(+) binding site. The interval Met-1858 to His-2113 is beta-ketoacyl reductase. An S-nitrosocysteine modification is found at Cys-2085. The 81-residue stretch at His-2113–Thr-2193 folds into the Carrier domain. Residue Ser-2151 is modified to O-(pantetheine 4'-phosphoryl)serine; alternate. Ser-2151 is subject to Phosphoserine; alternate. 2 positions are modified to phosphoserine: Ser-2191 and Ser-2230. The segment at Asn-2202 to Gly-2505 is thioesterase. The For thioesterase activity role is filled by Ser-2302. Lys-2385 is modified (N6-acetyllysine). Residue Lys-2443 forms a Glycyl lysine isopeptide (Lys-Gly) (interchain with G-Cter in SUMO2) linkage. Residue His-2475 is the For thioesterase activity of the active site.

As to quaternary structure, homodimer which is arranged in a head to tail fashion. Interacts with CEACAM1; this interaction is insulin and phosphorylation-dependent; reduces fatty-acid synthase activity. Post-translationally, S-nitrosylation of Fatty acid synthase at cysteine residues Cys-1464 or Cys-2085 is important for the enzyme dimerization. In adipocytes, S-nitrosylation of Fatty acid synthase occurs under physiological conditions and gradually increases during adipogenesis.

The protein localises to the cytoplasm. It localises to the melanosome. The catalysed reaction is acetyl-CoA + n malonyl-CoA + 2n NADPH + 2n H(+) = a long-chain fatty acid + (n+1) CoA + n CO2 + 2n NADP(+).. It carries out the reaction holo-[ACP] + acetyl-CoA = acetyl-[ACP] + CoA. The enzyme catalyses holo-[ACP] + malonyl-CoA = malonyl-[ACP] + CoA. It catalyses the reaction a fatty acyl-[ACP] + malonyl-[ACP] + H(+) = a 3-oxoacyl-[ACP] + holo-[ACP] + CO2. The catalysed reaction is a (3R)-hydroxyacyl-[ACP] + NADP(+) = a 3-oxoacyl-[ACP] + NADPH + H(+). It carries out the reaction a (3R)-hydroxyacyl-[ACP] = a (2E)-enoyl-[ACP] + H2O. The enzyme catalyses a 2,3-saturated acyl-[ACP] + NADP(+) = a (2E)-enoyl-[ACP] + NADPH + H(+). It catalyses the reaction hexadecanoyl-[ACP] + H2O = hexadecanoate + holo-[ACP] + H(+). The catalysed reaction is acetyl-[ACP] + malonyl-[ACP] + H(+) = 3-oxobutanoyl-[ACP] + holo-[ACP] + CO2. It carries out the reaction 3-oxobutanoyl-[ACP] + NADPH + H(+) = (3R)-hydroxybutanoyl-[ACP] + NADP(+). The enzyme catalyses (3R)-hydroxybutanoyl-[ACP] = (2E)-butenoyl-[ACP] + H2O. It catalyses the reaction (2E)-butenoyl-[ACP] + NADPH + H(+) = butanoyl-[ACP] + NADP(+). The catalysed reaction is butanoyl-[ACP] + malonyl-[ACP] + H(+) = 3-oxohexanoyl-[ACP] + holo-[ACP] + CO2. It carries out the reaction 3-oxohexanoyl-[ACP] + NADPH + H(+) = (3R)-hydroxyhexanoyl-[ACP] + NADP(+). The enzyme catalyses (3R)-hydroxyhexanoyl-[ACP] = (2E)-hexenoyl-[ACP] + H2O. It catalyses the reaction (2E)-hexenoyl-[ACP] + NADPH + H(+) = hexanoyl-[ACP] + NADP(+). The catalysed reaction is hexanoyl-[ACP] + malonyl-[ACP] + H(+) = 3-oxooctanoyl-[ACP] + holo-[ACP] + CO2. It carries out the reaction 3-oxooctanoyl-[ACP] + NADPH + H(+) = (3R)-hydroxyoctanoyl-[ACP] + NADP(+). The enzyme catalyses (3R)-hydroxyoctanoyl-[ACP] = (2E)-octenoyl-[ACP] + H2O. It catalyses the reaction (2E)-octenoyl-[ACP] + NADPH + H(+) = octanoyl-[ACP] + NADP(+). The catalysed reaction is octanoyl-[ACP] + malonyl-[ACP] + H(+) = 3-oxodecanoyl-[ACP] + holo-[ACP] + CO2. It carries out the reaction 3-oxodecanoyl-[ACP] + NADPH + H(+) = (3R)-hydroxydecanoyl-[ACP] + NADP(+). The enzyme catalyses (3R)-hydroxydecanoyl-[ACP] = (2E)-decenoyl-[ACP] + H2O. It catalyses the reaction (2E)-decenoyl-[ACP] + NADPH + H(+) = decanoyl-[ACP] + NADP(+). The catalysed reaction is decanoyl-[ACP] + malonyl-[ACP] + H(+) = 3-oxododecanoyl-[ACP] + holo-[ACP] + CO2. It carries out the reaction 3-oxododecanoyl-[ACP] + NADPH + H(+) = (3R)-hydroxydodecanoyl-[ACP] + NADP(+). The enzyme catalyses (3R)-hydroxydodecanoyl-[ACP] = (2E)-dodecenoyl-[ACP] + H2O. It catalyses the reaction (2E)-dodecenoyl-[ACP] + NADPH + H(+) = dodecanoyl-[ACP] + NADP(+). The catalysed reaction is dodecanoyl-[ACP] + malonyl-[ACP] + H(+) = 3-oxotetradecanoyl-[ACP] + holo-[ACP] + CO2. It carries out the reaction 3-oxotetradecanoyl-[ACP] + NADPH + H(+) = (3R)-hydroxytetradecanoyl-[ACP] + NADP(+). The enzyme catalyses (3R)-hydroxytetradecanoyl-[ACP] = (2E)-tetradecenoyl-[ACP] + H2O. It catalyses the reaction (2E)-tetradecenoyl-[ACP] + NADPH + H(+) = tetradecanoyl-[ACP] + NADP(+). The catalysed reaction is tetradecanoyl-[ACP] + malonyl-[ACP] + H(+) = 3-oxohexadecanoyl-[ACP] + holo-[ACP] + CO2. It carries out the reaction 3-oxohexadecanoyl-[ACP] + NADPH + H(+) = (3R)-hydroxyhexadecanoyl-[ACP] + NADP(+). The enzyme catalyses (3R)-hydroxyhexadecanoyl-[ACP] = (2E)-hexadecenoyl-[ACP] + H2O. It catalyses the reaction (2E)-hexadecenoyl-[ACP] + NADPH + H(+) = hexadecanoyl-[ACP] + NADP(+). The catalysed reaction is hexadecanoyl-[ACP] + malonyl-[ACP] + H(+) = 3-oxooctadecanoyl-[ACP] + holo-[ACP] + CO2. It carries out the reaction 3-oxooctadecanoyl-[ACP] + NADPH + H(+) = (3R)-hydroxyoctadecanoyl-[ACP] + NADP(+). The enzyme catalyses (3R)-hydroxyoctadecanoyl-[ACP] = (2E)-octadecenoyl-[ACP] + H2O. It catalyses the reaction (2E)-octadecenoyl-[ACP] + NADPH + H(+) = octadecanoyl-[ACP] + NADP(+). The catalysed reaction is tetradecanoyl-[ACP] + H2O = tetradecanoate + holo-[ACP] + H(+). It carries out the reaction octadecanoyl-[ACP] + H2O = octadecanoate + holo-[ACP] + H(+). Its pathway is lipid metabolism; fatty acid biosynthesis. With respect to regulation, cerulenin, a potent non-competitive pharmacological inhibitor of FAS, binds covalently to the active site of the condensing enzyme region, inactivating a key enzyme step in fatty acid synthesis. Another inhibitor, though less efficient, is C75, a member of the alpha-methylene-gamma-butyrolactone chemical class, also proposed as an antitumour and anti-obesity agent. Fatty acid synthetase is a multifunctional enzyme that catalyzes the de novo biosynthesis of long-chain saturated fatty acids starting from acetyl-CoA and malonyl-CoA in the presence of NADPH. This multifunctional protein contains 7 catalytic activities and a site for the binding of the prosthetic group 4'-phosphopantetheine of the acyl carrier protein ([ACP]) domain. The sequence is that of Fatty acid synthase (Fasn) from Rattus norvegicus (Rat).